The sequence spans 245 residues: tRNA pseudouridine synthase A (245 aa).

The active-site Nucleophile is the Asp-52. Substrate is bound at residue Tyr-111.

It belongs to the tRNA pseudouridine synthase TruA family. Homodimer.

It carries out the reaction uridine(38/39/40) in tRNA = pseudouridine(38/39/40) in tRNA. In terms of biological role, formation of pseudouridine at positions 38, 39 and 40 in the anticodon stem and loop of transfer RNAs. The polypeptide is tRNA pseudouridine synthase A (Rhodopseudomonas palustris (strain BisB5)).